We begin with the raw amino-acid sequence, 430 residues long: UDP-N-acetylglucosamine 1-carboxyvinyltransferase 1 (430 aa).

A phosphoenolpyruvate-binding site is contributed by 22–23 (KN). UDP-N-acetyl-alpha-D-glucosamine is bound at residue arginine 93. Catalysis depends on cysteine 117, which acts as the Proton donor. Cysteine 117 is subject to 2-(S-cysteinyl)pyruvic acid O-phosphothioketal. UDP-N-acetyl-alpha-D-glucosamine is bound by residues 122-126 (RPVDL), aspartate 305, and valine 327.

The protein belongs to the EPSP synthase family. MurA subfamily.

It is found in the cytoplasm. The enzyme catalyses phosphoenolpyruvate + UDP-N-acetyl-alpha-D-glucosamine = UDP-N-acetyl-3-O-(1-carboxyvinyl)-alpha-D-glucosamine + phosphate. It participates in cell wall biogenesis; peptidoglycan biosynthesis. Its function is as follows. Cell wall formation. Adds enolpyruvyl to UDP-N-acetylglucosamine. This chain is UDP-N-acetylglucosamine 1-carboxyvinyltransferase 1, found in Listeria monocytogenes serotype 4b (strain F2365).